The chain runs to 184 residues: Probable gluconokinase (184 aa).

Residue 11 to 18 (GVSGSGKS) coordinates ATP.

This sequence belongs to the gluconokinase GntK/GntV family.

It catalyses the reaction D-gluconate + ATP = 6-phospho-D-gluconate + ADP + H(+). It participates in carbohydrate acid metabolism; D-gluconate degradation. This Mus musculus (Mouse) protein is Probable gluconokinase (Idnk).